A 1060-amino-acid polypeptide reads, in one-letter code: Carbamoyl phosphate synthase large chain (1060 aa).

A carboxyphosphate synthetic domain region spans residues 1–401 (MPKRTDIRKI…SLLKACRSLE (401 aa)). Residues Arg-129, Arg-169, Gly-175, Gly-176, Arg-208, Ile-210, Glu-215, Gly-241, Ile-242, His-243, Gln-284, and Glu-298 each contribute to the ATP site. Residues 133–327 (KQLMEELNQP…IAKLAAKIAV (195 aa)) form the ATP-grasp 1 domain. The Mg(2+) site is built by Gln-284, Glu-298, and Asn-300. Gln-284, Glu-298, and Asn-300 together coordinate Mn(2+). Residues 402 to 546 (IGVDHIKIAD…YSTYAVENES (145 aa)) form an oligomerization domain region. The carbamoyl phosphate synthetic domain stretch occupies residues 547–929 (LISDKASILV…ALYKAFEAAY (383 aa)). The ATP-grasp 2 domain occupies 671-861 (EATLQALNIP…MAQVATKVIL (191 aa)). Residues Arg-707, Ala-746, Leu-748, Glu-752, Gly-777, Val-778, His-779, Ser-780, Gln-820, and Glu-832 each coordinate ATP. Residues Gln-820, Glu-832, and Asn-834 each contribute to the Mg(2+) site. The Mn(2+) site is built by Gln-820, Glu-832, and Asn-834. The MGS-like domain maps to 930 to 1060 (LHMPDYGNIV…SRAFTLKVLD (131 aa)). The segment at 930 to 1060 (LHMPDYGNIV…SRAFTLKVLD (131 aa)) is allosteric domain.

It belongs to the CarB family. Composed of two chains; the small (or glutamine) chain promotes the hydrolysis of glutamine to ammonia, which is used by the large (or ammonia) chain to synthesize carbamoyl phosphate. Tetramer of heterodimers (alpha,beta)4. The cofactor is Mg(2+). Mn(2+) serves as cofactor.

The catalysed reaction is hydrogencarbonate + L-glutamine + 2 ATP + H2O = carbamoyl phosphate + L-glutamate + 2 ADP + phosphate + 2 H(+). It carries out the reaction hydrogencarbonate + NH4(+) + 2 ATP = carbamoyl phosphate + 2 ADP + phosphate + 2 H(+). It participates in amino-acid biosynthesis; L-arginine biosynthesis; carbamoyl phosphate from bicarbonate: step 1/1. It functions in the pathway pyrimidine metabolism; UMP biosynthesis via de novo pathway; (S)-dihydroorotate from bicarbonate: step 1/3. Functionally, large subunit of the glutamine-dependent carbamoyl phosphate synthetase (CPSase). CPSase catalyzes the formation of carbamoyl phosphate from the ammonia moiety of glutamine, carbonate, and phosphate donated by ATP, constituting the first step of 2 biosynthetic pathways, one leading to arginine and/or urea and the other to pyrimidine nucleotides. The large subunit (synthetase) binds the substrates ammonia (free or transferred from glutamine from the small subunit), hydrogencarbonate and ATP and carries out an ATP-coupled ligase reaction, activating hydrogencarbonate by forming carboxy phosphate which reacts with ammonia to form carbamoyl phosphate. This Streptococcus agalactiae serotype V (strain ATCC BAA-611 / 2603 V/R) protein is Carbamoyl phosphate synthase large chain.